A 279-amino-acid polypeptide reads, in one-letter code: Probable thymidylate synthase (279 aa).

DUMP contacts are provided by residues Arg-21 and 136-137 (RR). Cys-156 acts as the Nucleophile in catalysis. Residues 177 to 180 (RSVD), Asn-188, and 218 to 220 (HIY) contribute to the dUMP site. Asp-180 contributes to the (6R)-5,10-methylene-5,6,7,8-tetrahydrofolate binding site.

It belongs to the thymidylate synthase family.

The enzyme catalyses dUMP + (6R)-5,10-methylene-5,6,7,8-tetrahydrofolate = 7,8-dihydrofolate + dTMP. In terms of biological role, sythesizes the thymine necessary for the viral DNA replication. The protein is Probable thymidylate synthase of Escherichia coli (Enterobacteria phage T5).